The following is a 135-amino-acid chain: HTH-type transcriptional activator AarP (135 aa).

Positions 22–120 (SEILVWIEGN…GISPSLYRLS (99 aa)) constitute an HTH araC/xylS-type domain. 2 consecutive DNA-binding regions (H-T-H motif) follow at residues 39–60 (DDIAQHSGYTKWHLQRVFRKIV) and 87–110 (VIDIALKYQFDSQQSFAKRFKAYL).

Transcriptional activator of 2'-N-acetyltransferase. This chain is HTH-type transcriptional activator AarP (aarP), found in Providencia stuartii.